The following is a 742-amino-acid chain: Synaptic vesicle glycoprotein 2A (742 aa).

The segment at 1–57 is interaction with SYT1; that stretch reads MEEGFRDRAAFIRGAKDIAKEVKKHAAKKVVKGLDRVQDEYSRRSYSRFEEEDDDDD. Topologically, residues 1-169 are cytoplasmic; that stretch reads MEEGFRDRAA…GHGRFQWTLY (169 aa). Over residues 33 to 49 the composition is skewed to basic and acidic residues; it reads GLDRVQDEYSRRSYSRF. The disordered stretch occupies residues 33-144; sequence GLDRVQDEYS…GRGEAQRRKE (112 aa). 2 positions are modified to phosphoserine: Ser-80 and Ser-81. Phosphothreonine is present on Thr-84. Over residues 122 to 137 the composition is skewed to gly residues; sequence VRGGLSDGEGPPGGRG. The residue at position 127 (Ser-127) is a Phosphoserine. A helical transmembrane segment spans residues 170–190; sequence FVLGLALMADGVEVFVVGFVL. Residues 191–205 are Extracellular-facing; the sequence is PSAEKDMCLSDSNKG. Residues 206-226 form a helical membrane-spanning segment; it reads MLGLIVYLGMMVGAFLWGGLA. Residues 227–233 lie on the Cytoplasmic side of the membrane; the sequence is DRLGRRQ. The chain crosses the membrane as a helical span at residues 234–254; it reads CLLISLSVNSVFAFFSSFVQG. Over 255-262 the chain is Extracellular; sequence YGTFLFCR. A helical membrane pass occupies residues 263–283; it reads LLSGVGIGGSIPIVFSYFSEF. Topologically, residues 284 to 294 are cytoplasmic; sequence LAQEKRGEHLS. Residues 295–315 form a helical membrane-spanning segment; that stretch reads WLCMFWMIGGVYAAAMAWAII. The Extracellular portion of the chain corresponds to 316-334; the sequence is PHYGWSFQMGSAYQFHSWR. Residues 335–355 form a helical membrane-spanning segment; it reads VFVLVCAFPSVFAIGALTTQP. Topologically, residues 356–447 are cytoplasmic; it reads ESPRFFLENG…CFGPEYRRIT (92 aa). Ser-393 carries the phosphoserine modification. A helical transmembrane segment spans residues 448 to 468; sequence LMMMGVWFTMSFSYYGLTVWF. Topologically, residues 469-598 are extracellular; that stretch reads PDMIRHLQAV…GTGEGAYMVY (130 aa). Tyr-480 bears the Phosphotyrosine mark. Residues Asn-498, Asn-548, and Asn-573 are each glycosylated (N-linked (GlcNAc...) asparagine). A helical membrane pass occupies residues 599–619; it reads FVSFLGTLAVLPGNIVSALLM. At 620-626 the chain is on the cytoplasmic side; the sequence is DKIGRLR. The chain crosses the membrane as a helical span at residues 627-647; sequence MLAGSSVMSCVSCFFLSFGNS. Over 648–651 the chain is Extracellular; the sequence is ESAM. A helical membrane pass occupies residues 652-672; that stretch reads IALLCLFGGVSIASWNALDVL. Residues 673–685 are Cytoplasmic-facing; it reads TVELYPSDKRTTA. The chain crosses the membrane as a helical span at residues 686–708; the sequence is FGFLNALCKLAAVLGISIFTSFV. Topologically, residues 709 to 712 are extracellular; the sequence is GITK. A helical membrane pass occupies residues 713-731; sequence AAPILFASAALALGSSLAL. The Cytoplasmic portion of the chain corresponds to 732–742; it reads KLPETRGQVLQ.

Belongs to the major facilitator superfamily. In terms of assembly, interacts with SYT1/synaptotagmin-1 in a calcium-dependent manner. Binds the adapter protein complex AP-2. (Microbial infection) Interacts with C.botulinum neurotoxin type A2 (BoNT/A, botA). Interaction is improved by glycosylation of SV2. Phosphorylation by CK1 of the N-terminal cytoplasmic domain regulates interaction with SYT1. Post-translationally, N-glycosylated.

It localises to the presynapse. It is found in the cytoplasmic vesicle. Its subcellular location is the secretory vesicle. The protein localises to the synaptic vesicle membrane. Plays a role in the control of regulated secretion in neural and endocrine cells, enhancing selectively low-frequency neurotransmission. Positively regulates vesicle fusion by maintaining the readily releasable pool of secretory vesicles. Its function is as follows. (Microbial infection) Receptor for the C.botulinum neurotoxin type A2 (BoNT/A, botA); glycosylation is not essential but enhances the interaction. Probably also serves as a receptor for the closely related C.botulinum neurotoxin type A1. The polypeptide is Synaptic vesicle glycoprotein 2A (SV2A) (Homo sapiens (Human)).